Here is a 450-residue protein sequence, read N- to C-terminus: NADP-specific glutamate dehydrogenase (450 aa).

Lys-114 is an active-site residue.

It belongs to the Glu/Leu/Phe/Val dehydrogenases family. Homohexamer.

The enzyme catalyses L-glutamate + NADP(+) + H2O = 2-oxoglutarate + NH4(+) + NADPH + H(+). The chain is NADP-specific glutamate dehydrogenase (gdhA) from Botryotinia fuckeliana (Noble rot fungus).